We begin with the raw amino-acid sequence, 523 residues long: 2-isopropylmalate synthase (523 aa).

The Pyruvate carboxyltransferase domain occupies 5–267 (VIIFDTTLRD…HTAINHQEIW (263 aa)). D14, H202, H204, and N238 together coordinate Mn(2+). The segment at 392-523 (RLDYFSVQSG…QHNENNKETV (132 aa)) is regulatory domain.

The protein belongs to the alpha-IPM synthase/homocitrate synthase family. LeuA type 1 subfamily. As to quaternary structure, homodimer. It depends on Mn(2+) as a cofactor.

Its subcellular location is the cytoplasm. The enzyme catalyses 3-methyl-2-oxobutanoate + acetyl-CoA + H2O = (2S)-2-isopropylmalate + CoA + H(+). The protein operates within amino-acid biosynthesis; L-leucine biosynthesis; L-leucine from 3-methyl-2-oxobutanoate: step 1/4. In terms of biological role, catalyzes the condensation of the acetyl group of acetyl-CoA with 3-methyl-2-oxobutanoate (2-ketoisovalerate) to form 3-carboxy-3-hydroxy-4-methylpentanoate (2-isopropylmalate). The chain is 2-isopropylmalate synthase from Escherichia coli O157:H7.